Here is a 360-residue protein sequence, read N- to C-terminus: Photosystem II protein D1 2 (360 aa).

Helical transmembrane passes span 29–46, 118–133, and 142–156; these read YIGWFGVIMIPTLLAATI, HFLIGIFCYMGREWEL, and WIPVAFSAPVAAATA. His-118 contacts chlorophyll a. Residue Tyr-126 coordinates pheophytin a. 2 residues coordinate [CaMn4O5] cluster: Asp-170 and Glu-189. A helical membrane pass occupies residues 197-218; it reads FHMLGVAGVFGGALFAAMHGSL. Residue His-198 coordinates chlorophyll a. A quinone-binding positions include His-215 and 264–265; that span reads SF. His-215 serves as a coordination point for Fe cation. His-272 contributes to the Fe cation binding site. The helical transmembrane segment at 274–288 threads the bilayer; it reads FLAAWPVVGIWFAAL. Residues His-332, Glu-333, Asp-342, and Ala-344 each coordinate [CaMn4O5] cluster. Residues 345–360 constitute a propeptide that is removed on maturation; the sequence is SGELAPVAMIAPSIEA.

It belongs to the reaction center PufL/M/PsbA/D family. In terms of assembly, PSII is composed of 1 copy each of membrane proteins PsbA, PsbB, PsbC, PsbD, PsbE, PsbF, PsbH, PsbI, PsbJ, PsbK, PsbL, PsbM, PsbT, PsbX, PsbY, PsbZ, Psb30/Ycf12, peripheral proteins PsbO, CyanoQ (PsbQ), PsbU, PsbV and a large number of cofactors. It forms dimeric complexes. Requires The D1/D2 heterodimer binds P680, chlorophylls that are the primary electron donor of PSII, and subsequent electron acceptors. It shares a non-heme iron and each subunit binds pheophytin, quinone, additional chlorophylls, carotenoids and lipids. D1 provides most of the ligands for the Mn4-Ca-O5 cluster of the oxygen-evolving complex (OEC). There is also a Cl(-1) ion associated with D1 and D2, which is required for oxygen evolution. The PSII complex binds additional chlorophylls, carotenoids and specific lipids. as cofactor. In terms of processing, tyr-161 forms a radical intermediate that is referred to as redox-active TyrZ, YZ or Y-Z. C-terminally processed by CtpA; processing is essential to allow assembly of the oxygen-evolving complex and thus photosynthetic growth.

It localises to the cellular thylakoid membrane. The catalysed reaction is 2 a plastoquinone + 4 hnu + 2 H2O = 2 a plastoquinol + O2. In terms of biological role, photosystem II (PSII) is a light-driven water:plastoquinone oxidoreductase that uses light energy to abstract electrons from H(2)O, generating O(2) and a proton gradient subsequently used for ATP formation. It consists of a core antenna complex that captures photons, and an electron transfer chain that converts photonic excitation into a charge separation. The D1/D2 (PsbA/PsbD) reaction center heterodimer binds P680, the primary electron donor of PSII as well as several subsequent electron acceptors. The polypeptide is Photosystem II protein D1 2 (Synechococcus elongatus).